The following is a 519-amino-acid chain: Exodeoxyribonuclease 7 large subunit (519 aa).

The tract at residues 493 to 519 is disordered; it reads AISTGKSSNTNRKSAPAREPGKQGSLF. Residues 496–505 show a composition bias toward polar residues; it reads TGKSSNTNRK.

It belongs to the XseA family. Heterooligomer composed of large and small subunits.

It is found in the cytoplasm. The enzyme catalyses Exonucleolytic cleavage in either 5'- to 3'- or 3'- to 5'-direction to yield nucleoside 5'-phosphates.. Bidirectionally degrades single-stranded DNA into large acid-insoluble oligonucleotides, which are then degraded further into small acid-soluble oligonucleotides. This Chelativorans sp. (strain BNC1) protein is Exodeoxyribonuclease 7 large subunit.